Reading from the N-terminus, the 317-residue chain is NF-kappa-B inhibitor alpha (317 aa).

Residues 1 to 39 (MFQAAERPQEWAMEGPRDGLKKERLLDDRHDSGLDSMKD) form a disordered region. Residues 15–39 (GPRDGLKKERLLDDRHDSGLDSMKD) show a composition bias toward basic and acidic residues. Lys21 participates in a covalent cross-link: Glycyl lysine isopeptide (Lys-Gly) (interchain with G-Cter in SUMO); alternate. Lys21 participates in a covalent cross-link: Glycyl lysine isopeptide (Lys-Gly) (interchain with G-Cter in ubiquitin); alternate. Lys22 participates in a covalent cross-link: Glycyl lysine isopeptide (Lys-Gly) (interchain with G-Cter in ubiquitin). Positions 30–36 (HDSGLDS) match the Destruction motif motif. Ser32 bears the Phosphoserine; by IKKA and IKKE mark. At Ser36 the chain carries Phosphoserine; by IKKA, IKKB, IKKE and TBK1. At Tyr42 the chain carries Phosphotyrosine; by Tyr-kinases. The Nuclear export signal signature appears at 45–54 (MVKELQEIRL). ANK repeat units lie at residues 73–103 (DGDSFLHLAIIHEEKALTMEVIRQVKGDLAF), 110–139 (LQQTPLHLAVITNQPEIAEALLGAGCDPEL), 143–172 (RGNTPLHLACEQGCLASVGVLTQSCTTPHL), 182–211 (NGHTCLHLASIHGYLGIVELLVSLGADVNA), and 216–245 (NGRTALHLAVDLQNPDLVSLLLKCGADVNR). Positions 110–120 (LQQTPLHLAVI) match the Nuclear import signal motif. 2 positions are modified to (3S)-3-hydroxyasparagine; by HIF1AN; partial: Asn210 and Asn244. Ser283 and Ser288 each carry phosphoserine; by CK2. Thr291 carries the phosphothreonine; by CK2 modification. Position 293 is a phosphoserine; by CK2 (Ser293). Thr299 carries the phosphothreonine; by CK2 modification.

The protein belongs to the NF-kappa-B inhibitor family. In terms of assembly, interacts with RELA; the interaction requires the nuclear import signal. Part of a 70-90 kDa complex at least consisting of CHUK, IKBKB, NFKBIA, RELA, ELP1 and MAP3K14. Interacts with NKIRAS1 and NKIRAS2. Interacts with isoform 1 and isoform 2 of RWDD3; the interaction enhances sumoylation. Interacts with PRMT2. Interacts with PRKACA in platelets; this interaction is disrupted by thrombin and collagen. Interacts with MEFV. Interacts with DDRGK1; positively regulates NFKBIA phosphorylation and degradation. Interacts with HNRNPA2B1; the interaction may be mediated by the RRM2 domain of HNRNPA2B1, and HNRNPA2B1 may interact simultaneously with FAM76B and either NFKBIA or NFKBIE to form a complex. (Microbial infection) Interacts with HBV protein X. Post-translationally, phosphorylated at Ser-32 and Ser-36 by IKKA/CHUK and IKKB/IKBKB; disables inhibition of NF-kappa-B DNA-binding activity. Phosphorylation at positions 32 and 36 is prerequisite to recognition by the SCF(FBXW11) and SCF(BTRC) complexes, leading to polyubiquitination and subsequent degradation. Phosphorylated at Ser-32 in response to FK506 treatment: phosphorylation is independent of IKKA/CHUK and IKKB/IKBKB and promotes NFKBIA degradation, followed by NF-kappa-B activation. Phosphorylated at Tyr-42: its effect is however unclear. According to a report, phosphorylation at Tyr-42 activates NF-kappa-B without triggering proteolytic degradation of NFKBIA. According to another publication, phosphorylation at Tyr-42 inhibits NF-kappa-B activity by preventing phosphorylation at Ser-32 and Ser-36 and subsequent ubiquitination and degradation. Polyubiquitinated at Lys-21 and/or Lys-22 following phosphorylation at Ser-32 and Ser-36. Monoubiquitinated at Lys-21 and/or Lys-22 by UBE2D3. Ubiquitin chain elongation is then performed by CDC34 in cooperation with the SCF(FBXW11) E3 ligase complex, building ubiquitin chains from the UBE2D3-primed NFKBIA-linked ubiquitin. The resulting polyubiquitination leads to protein degradation. Also ubiquitinated by the SCF(BTRC) complex following stimulus-dependent phosphorylation at Ser-32 and Ser-36. Deubiquitinated by USP38, leading to NF-kappa-B inhibition. In terms of processing, sumoylated; sumoylation requires the presence of the nuclear import signal. Sumoylation blocks ubiquitination and proteasome-mediated degradation of the protein thereby increasing the protein stability. Post-translationally, hydroxylated by HIF1AN. (Microbial infection) Deubiquitinated by porcine reproductive and respiratory syndrome virus Nsp2 protein, which thereby interferes with NFKBIA degradation and impairs subsequent NF-kappa-B activation.

It localises to the cytoplasm. Its subcellular location is the nucleus. Functionally, inhibits the activity of dimeric NF-kappa-B/REL complexes by trapping REL (RELA/p65 and NFKB1/p50) dimers in the cytoplasm by masking their nuclear localization signals. On cellular stimulation by immune and pro-inflammatory responses, becomes phosphorylated promoting ubiquitination and degradation, enabling the dimeric RELA to translocate to the nucleus and activate transcription. This is NF-kappa-B inhibitor alpha (NFKBIA) from Homo sapiens (Human).